The sequence spans 322 residues: tRNA U34 carboxymethyltransferase (322 aa).

Carboxy-S-adenosyl-L-methionine is bound by residues Lys-92, Trp-106, Lys-111, Gly-131, 153–155 (DPT), 181–182 (VE), Met-196, Tyr-200, and Arg-315.

Belongs to the class I-like SAM-binding methyltransferase superfamily. CmoB family. As to quaternary structure, homotetramer.

The enzyme catalyses carboxy-S-adenosyl-L-methionine + 5-hydroxyuridine(34) in tRNA = 5-carboxymethoxyuridine(34) in tRNA + S-adenosyl-L-homocysteine + H(+). In terms of biological role, catalyzes carboxymethyl transfer from carboxy-S-adenosyl-L-methionine (Cx-SAM) to 5-hydroxyuridine (ho5U) to form 5-carboxymethoxyuridine (cmo5U) at position 34 in tRNAs. The polypeptide is tRNA U34 carboxymethyltransferase (Colwellia psychrerythraea (strain 34H / ATCC BAA-681) (Vibrio psychroerythus)).